Consider the following 358-residue polypeptide: Trace amine-associated receptor 7b (358 aa).

Residues 1 to 47 (MATDNDSFPWDQDSILSSDMFSATSTELCYENLNRSCVRSPYSPGPR) lie on the Extracellular side of the membrane. Asn5 and Asn34 each carry an N-linked (GlcNAc...) asparagine glycan. Disulfide bonds link Cys37–Cys201 and Cys120–Cys205. Residues 48–68 (LILYAVFGFGAALAVCGNLLV) form a helical membrane-spanning segment. Residues 69–83 (MTSILHFRQLHSPAN) lie on the Cytoplasmic side of the membrane. The chain crosses the membrane as a helical span at residues 84-104 (FLVVSLACADFLVGLTVMPFS). Residues 105–121 (TVRSVEGCWYFGESYCK) lie on the Extracellular side of the membrane. Residues 122 to 143 (LHTCFDVSFCYCSIFHLCFISV) traverse the membrane as a helical segment. Over 144–166 (DRYIAVSDPLTYPTRFTAFVSGK) the chain is Cytoplasmic. A helical transmembrane segment spans residues 167-187 (CITFSWLLSTIYGFSLLYTGA). Residues 188 to 212 (NEAGLEDLVSALTCVGGCQLAVNQS) lie on the Extracellular side of the membrane. Asn210 carries an N-linked (GlcNAc...) asparagine glycan. The chain crosses the membrane as a helical span at residues 213–233 (WVFINFLLFLIPTLVMITVYS). Topologically, residues 234 to 274 (KIFLIAKQQAQNIEKMSKQTARASDSYKDRVAKRERKAAKT) are cytoplasmic. Residues 275–295 (LGIAVAAFLLSWLPYFIDSII) traverse the membrane as a helical segment. Topologically, residues 296–309 (DAFLGFITPTYVYE) are extracellular. A helical membrane pass occupies residues 310-333 (ILVWIAYYNSAMNPLIYAFFYPWF). The Cytoplasmic segment spans residues 334 to 358 (RKAIKLIVSGKVLRENSSTTNLFPE).

The protein belongs to the G-protein coupled receptor 1 family. In terms of tissue distribution, specifically expressed in neurons of the olfactory epithelium.

It localises to the cell membrane. Olfactory receptor specific for N,N-dimethylalkylamines trace amines, such as N,N-dimethylcyclohexylamine. Trace amine compounds are enriched in animal body fluids and act on trace amine-associated receptors (TAARs) to elicit both intraspecific and interspecific innate behaviors. Ligand-binding causes a conformation change that triggers signaling via G(s)-class of G alpha proteins (GNAL or GNAS). This Mus musculus (Mouse) protein is Trace amine-associated receptor 7b.